The chain runs to 35 residues: Photosystem II reaction center protein T (35 aa).

Residues 3–23 (ALVYTFLLVSTLGIIFFAIFF) traverse the membrane as a helical segment.

It belongs to the PsbT family. As to quaternary structure, PSII is composed of 1 copy each of membrane proteins PsbA, PsbB, PsbC, PsbD, PsbE, PsbF, PsbH, PsbI, PsbJ, PsbK, PsbL, PsbM, PsbT, PsbY, PsbZ, Psb30/Ycf12, at least 3 peripheral proteins of the oxygen-evolving complex and a large number of cofactors. It forms dimeric complexes.

The protein localises to the plastid. Its subcellular location is the chloroplast thylakoid membrane. Its function is as follows. Found at the monomer-monomer interface of the photosystem II (PS II) dimer, plays a role in assembly and dimerization of PSII. PSII is a light-driven water plastoquinone oxidoreductase, using light energy to abstract electrons from H(2)O, generating a proton gradient subsequently used for ATP formation. In Bassia hyssopifolia (Fivehorn smotherweed), this protein is Photosystem II reaction center protein T.